A 773-amino-acid chain; its full sequence is Phenylalanine--tRNA ligase beta subunit (773 aa).

The region spanning 39-150 (LKAPDKVVVG…GKLELGRPLN (112 aa)) is the tRNA-binding domain. A B5 domain is found at 391–467 (KELPIIPISI…RIIGIDNIAS (77 aa)). Mg(2+) is bound by residues D445, D451, E454, and E455. The 92-residue stretch at 682–773 (SKFPAITRDL…TLKNLGLDLR (92 aa)) folds into the FDX-ACB domain.

The protein belongs to the phenylalanyl-tRNA synthetase beta subunit family. Type 1 subfamily. Tetramer of two alpha and two beta subunits. It depends on Mg(2+) as a cofactor.

The protein resides in the cytoplasm. It catalyses the reaction tRNA(Phe) + L-phenylalanine + ATP = L-phenylalanyl-tRNA(Phe) + AMP + diphosphate + H(+). This chain is Phenylalanine--tRNA ligase beta subunit, found in Campylobacter jejuni (strain RM1221).